Consider the following 295-residue polypeptide: Fructose-bisphosphate aldolase class 1 (295 aa).

The Proton acceptor role is filled by E176. K213 functions as the Schiff-base intermediate with dihydroxyacetone-P in the catalytic mechanism.

This sequence belongs to the class I fructose-bisphosphate aldolase family.

It catalyses the reaction beta-D-fructose 1,6-bisphosphate = D-glyceraldehyde 3-phosphate + dihydroxyacetone phosphate. It functions in the pathway carbohydrate degradation; glycolysis; D-glyceraldehyde 3-phosphate and glycerone phosphate from D-glucose: step 4/4. The protein is Fructose-bisphosphate aldolase class 1 of Clostridium beijerinckii (strain ATCC 51743 / NCIMB 8052) (Clostridium acetobutylicum).